Here is an 814-residue protein sequence, read N- to C-terminus: DNA ligase (814 aa).

Residues 46–50 (DAEYD), 95–96 (SL), and Glu129 each bind NAD(+). The N6-AMP-lysine intermediate role is filled by Lys131. NAD(+)-binding residues include Arg152, Glu189, Lys305, and Lys329. Positions 434, 437, 458, and 464 each coordinate Zn(2+). Residues 526–549 (SAQRRTEGEPAPKKPTKKKGEEED) form a disordered region. The 80-residue stretch at 735-814 (TSAAAFAGKT…DDWLAMLAEA (80 aa)) folds into the BRCT domain.

This sequence belongs to the NAD-dependent DNA ligase family. LigA subfamily. Requires Mg(2+) as cofactor. The cofactor is Mn(2+).

The enzyme catalyses NAD(+) + (deoxyribonucleotide)n-3'-hydroxyl + 5'-phospho-(deoxyribonucleotide)m = (deoxyribonucleotide)n+m + AMP + beta-nicotinamide D-nucleotide.. DNA ligase that catalyzes the formation of phosphodiester linkages between 5'-phosphoryl and 3'-hydroxyl groups in double-stranded DNA using NAD as a coenzyme and as the energy source for the reaction. It is essential for DNA replication and repair of damaged DNA. In Methylorubrum extorquens (strain CM4 / NCIMB 13688) (Methylobacterium extorquens), this protein is DNA ligase.